Here is a 510-residue protein sequence, read N- to C-terminus: Glycerol kinase (510 aa).

An ADP-binding site is contributed by threonine 13. Residues threonine 13 and threonine 14 each coordinate ATP. Residue threonine 13 participates in sn-glycerol 3-phosphate binding. Arginine 17 contributes to the ADP binding site. The sn-glycerol 3-phosphate site is built by arginine 83, glutamate 84, tyrosine 135, and aspartate 255. Glycerol is bound by residues arginine 83, glutamate 84, tyrosine 135, aspartate 255, and glutamine 256. Threonine 277, glycine 321, glycine 421, and asparagine 425 together coordinate ADP. Threonine 277, glycine 321, and glycine 421 together coordinate ATP.

It belongs to the FGGY kinase family.

It carries out the reaction glycerol + ATP = sn-glycerol 3-phosphate + ADP + H(+). The protein operates within polyol metabolism; glycerol degradation via glycerol kinase pathway; sn-glycerol 3-phosphate from glycerol: step 1/1. Functionally, key enzyme in the regulation of glycerol uptake and metabolism. Catalyzes the phosphorylation of glycerol to yield sn-glycerol 3-phosphate. The sequence is that of Glycerol kinase from Haloarcula marismortui (strain ATCC 43049 / DSM 3752 / JCM 8966 / VKM B-1809) (Halobacterium marismortui).